We begin with the raw amino-acid sequence, 2121 residues long: PAM2 domain-containing protein UPA2 (2121 aa).

A PAM2 1 motif is present at residues methionine 1 to glycine 17. 6 disordered regions span residues lysine 14–alanine 46, glutamine 262–threonine 302, alanine 375–threonine 397, alanine 475–glycine 507, alanine 522–leucine 543, and aspartate 586–arginine 819. Residues proline 339–asparagine 599 are effector domain. The span at glutamine 596 to serine 607 shows a compositional bias: polar residues. Acidic residues-rich tracts occupy residues glutamate 626–glutamate 637 and glutamate 646–asparagine 658. Over residues aspartate 679–glutamine 689 the composition is skewed to basic and acidic residues. Polar residues predominate over residues serine 690–proline 712. A compositionally biased stretch (basic and acidic residues) spans arginine 719–alanine 735. The segment covering arginine 736–glycine 745 has biased composition (basic residues). 2 stretches are compositionally biased toward polar residues: residues serine 749–isoleucine 758 and asparagine 777–serine 788. 2 short sequence motifs (PAM2) span residues serine 858–glycine 874 and threonine 920–phenylalanine 937. Over residues asparagine 950–valine 960 the composition is skewed to polar residues. The interval asparagine 950–alanine 1012 is disordered. Basic and acidic residues predominate over residues glycine 966–glutamate 981. A PAM2 4 motif is present at residues serine 1046–alanine 1063. Disordered stretches follow at residues lysine 1076 to proline 1096, serine 1119 to serine 1261, and serine 1337 to leucine 1369. The segment covering histidine 1198 to aspartate 1207 has biased composition (polar residues). Residues glycine 1248–serine 1261 are compositionally biased toward acidic residues. A compositionally biased stretch (polar residues) spans glutamate 1345 to leucine 1369. Residues leucine 1783 to serine 2054 adopt a coiled-coil conformation. Residues serine 2099–serine 2121 are disordered. The short motif at glycine 2118–tryptophan 2120 is the GWW element.

This sequence belongs to the UPA1 PAM2 domain-binding protein family. In terms of assembly, might form homodimers via its C-terminal coiled-coil domain. Part of large ribonucleoprotein complexes (mRNPs) containing RNA-binding proteins RRM4 and PAB1, endosome-binding protein UPA1, core scaffold protein UPA2 and associated factor GRP1. Interacts (via PAM2 motifs) with PAB1.

The protein resides in the cytoplasm. It localises to the cytoskeleton. Its subcellular location is the endosome. Functionally, core component of endosomal mRNA transport and appears to carry out crucial scaffolding functions. The endosomal mRNA transport regulates polarity of the infectious hyphae by transporting a broad spectrum of cargo mRNAs from the nucleus to cell poles. The chain is PAM2 domain-containing protein UPA2 from Mycosarcoma maydis (Corn smut fungus).